Consider the following 94-residue polypeptide: Co-chaperonin GroES (94 aa).

It belongs to the GroES chaperonin family. In terms of assembly, heptamer of 7 subunits arranged in a ring. Interacts with the chaperonin GroEL.

The protein resides in the cytoplasm. Functionally, together with the chaperonin GroEL, plays an essential role in assisting protein folding. The GroEL-GroES system forms a nano-cage that allows encapsulation of the non-native substrate proteins and provides a physical environment optimized to promote and accelerate protein folding. GroES binds to the apical surface of the GroEL ring, thereby capping the opening of the GroEL channel. The protein is Co-chaperonin GroES of Bacillus sp. (strain PS3).